The sequence spans 1096 residues: DNA-directed RNA polymerase subunit beta (1096 aa).

It belongs to the RNA polymerase beta chain family. As to quaternary structure, in plastids the minimal PEP RNA polymerase catalytic core is composed of four subunits: alpha, beta, beta', and beta''. When a (nuclear-encoded) sigma factor is associated with the core the holoenzyme is formed, which can initiate transcription.

It is found in the plastid. The protein resides in the chloroplast. It catalyses the reaction RNA(n) + a ribonucleoside 5'-triphosphate = RNA(n+1) + diphosphate. Functionally, DNA-dependent RNA polymerase catalyzes the transcription of DNA into RNA using the four ribonucleoside triphosphates as substrates. The chain is DNA-directed RNA polymerase subunit beta from Guillardia theta (Cryptophyte).